We begin with the raw amino-acid sequence, 290 residues long: 2-phosphoglycerate kinase (290 aa).

The 89-residue stretch at 1–89 (MIIVTDSERK…FWRELRRRKV (89 aa)) folds into the ATP-cone domain.

This sequence belongs to the 2-phosphoglycerate kinase family. A divalent metal cation is required as a cofactor.

It catalyses the reaction (2R)-2-phosphoglycerate + ATP = (2R)-2,3-bisphosphoglycerate + ADP + H(+). It functions in the pathway thermoadapter biosynthesis; cyclic 2,3-diphosphoglycerate biosynthesis; cyclic 2,3-diphosphoglycerate from 2-phospho-D-glycerate: step 1/2. Its function is as follows. Catalyzes the phosphorylation of 2-phosphoglycerate to 2,3-diphosphoglycerate. Involved in the biosynthesis of cyclic 2,3-bisphosphoglycerate, a thermoprotectant. This is 2-phosphoglycerate kinase from Thermococcus kodakarensis (strain ATCC BAA-918 / JCM 12380 / KOD1) (Pyrococcus kodakaraensis (strain KOD1)).